Consider the following 399-residue polypeptide: MVKLFKQETTTVGVEADVTSSRGCPAAAQAPDVSGALISGVPVSAPLVLSIDAMGGDRGPAAVLDGIALARRKYPDLHFLVHGPEADVAPLVKARRLKSCVTIRHATGVVTMHDKPAAVMRGGKDTSMWSTIDAVRDGAAQVAVSCGNTGALMAVSMLRLRKMPGVNRPAIAAFWPCKNPSGFNIMLDMGADVKAEARDLLTYALMGSSYARNALGLDRPRVGLLNVGTEEHKGHAELKIAAEMIGAMETAGGYEFVGFVEGNDLPGSRVDVIVTDGFTGNVALKTGEGTAKFAGELMREAFTSSLLSKLGALLASGALKRLKAKIDPRRVNGGVFLGLNGTVIKSHGGADATGVAAAIDLAARLAGLGFAERLAARVALASANGQDAASAEAGIENAK.

Belongs to the PlsX family. As to quaternary structure, homodimer. Probably interacts with PlsY.

The protein resides in the cytoplasm. The catalysed reaction is a fatty acyl-[ACP] + phosphate = an acyl phosphate + holo-[ACP]. It participates in lipid metabolism; phospholipid metabolism. Functionally, catalyzes the reversible formation of acyl-phosphate (acyl-PO(4)) from acyl-[acyl-carrier-protein] (acyl-ACP). This enzyme utilizes acyl-ACP as fatty acyl donor, but not acyl-CoA. This is Phosphate acyltransferase from Rhodobacter capsulatus (Rhodopseudomonas capsulata).